Reading from the N-terminus, the 720-residue chain is Calcium/calmodulin-dependent protein kinase type II (720 aa).

The 258-residue stretch at 12–269 (YDVKEELGKG…ADQALKVPWI (258 aa)) folds into the Protein kinase domain. Residues 18-26 (LGKGAFSVV) and Lys-41 contribute to the ATP site. Asp-134 (proton acceptor) is an active-site residue. At Thr-284 the chain carries Phosphothreonine; by autocatalysis. Disordered regions lie at residues 317 to 345 (SDST…QPTS) and 504 to 586 (DNLS…NLSA). Polar residues-rich tracts occupy residues 504-514 (DNLSASTSSDL) and 526-540 (PPST…SQTI). Residues 569-586 (SSSNSSTASKSSSTNLSA) show a composition bias toward low complexity.

The protein belongs to the protein kinase superfamily. CAMK Ser/Thr protein kinase family. CaMK subfamily. As to quaternary structure, dodecamer. Subunits are tightly packed around a central ring-shaped scaffold with extensive contacts between the regulatory segment of one kinase and the catalytic domain of another enabling cooperative activation of a subunit by the adjacent molecule. Interacts with and phosphorylates daf-16; the interaction promotes daf-16 nuclear localization. Interacts with egl-2 and tir-1. Interacts with nsy-1. The cofactor is Mg(2+). Expressed in the nervous system. Observed in the ADF and AWC neurons. Position in AWC neurons is regulated by microtubules. Localized to clusters in ventral cord neurites which appear to be required for glr-1 trafficking. Also present in oocytes.

The protein resides in the cytoplasm. Its subcellular location is the cell projection. It is found in the axon. The protein localises to the perikaryon. It catalyses the reaction L-seryl-[protein] + ATP = O-phospho-L-seryl-[protein] + ADP + H(+). The enzyme catalyses L-threonyl-[protein] + ATP = O-phospho-L-threonyl-[protein] + ADP + H(+). Its activity is regulated as follows. Ca2(+)/calmodulin binding removes an autoinhibitory regulatory segment located C-terminal to the kinase domain. This releases the catalytic activity of the enzyme and makes accessible a regulatory residue Thr-284. Phosphorylation of Thr-284 by another kinase domain within the oligomeric holoenzyme keeps CaMKII active in the absence of Ca(2+)/calmodulin by preventing the rebinding of the regulatory segment to the kinase domain and by increasing the affinity of calmodulin for the enzyme. Can respond to high-frequency Ca(2+) pulses to become Ca(2+) independent. Its function is as follows. Acts in the signaling of a variety of pathways and processes. Phosphorylates 'Ser-319' of daf-16 in response to stress signals, such as heat, starvation and oxidation, which plays a role in prolonging lifespan. Required for viability under chronic osmotic stress in which it acts downstream of osr-1. Has roles in locomotion, oocyte maturation, brood size, egg laying, defecation, meiotic maturation and neuronal cell fate specification. Required for the regulation of synaptic density and neuromuscular junction morphology. Regulates the synaptic trafficking of glr-1. Bidirectional modulator of neurotransmitter release with negative modulatory effects mainly mediated via slo-1 activation. Involved in activation of ADF neurons and increased tph-1 transcription following exposure to pathogenic bacteria which leads to learned olfactory aversion to the bacteria. Implicated in the muscle regulation of spicule protraction. In conjunction with egl-2 has a role in the suppression of mating behavior under food deprivation to encourage foraging. Involved in restricting str-2 expression to only one of the two AWC neurons. May suppress the functional response to an internal pacemaker, perhaps by modulating the activity of the IP3 receptor. The polypeptide is Calcium/calmodulin-dependent protein kinase type II (unc-43) (Caenorhabditis elegans).